Here is a 127-residue protein sequence, read N- to C-terminus: Aspartate 1-decarboxylase (127 aa).

Serine 25 functions as the Schiff-base intermediate with substrate; via pyruvic acid in the catalytic mechanism. Serine 25 carries the post-translational modification Pyruvic acid (Ser). A substrate-binding site is contributed by threonine 57. Tyrosine 58 acts as the Proton donor in catalysis. Position 73 to 75 (73 to 75 (GAA)) interacts with substrate.

Belongs to the PanD family. As to quaternary structure, heterooctamer of four alpha and four beta subunits. Requires pyruvate as cofactor. In terms of processing, is synthesized initially as an inactive proenzyme, which is activated by self-cleavage at a specific serine bond to produce a beta-subunit with a hydroxyl group at its C-terminus and an alpha-subunit with a pyruvoyl group at its N-terminus.

It is found in the cytoplasm. It carries out the reaction L-aspartate + H(+) = beta-alanine + CO2. It participates in cofactor biosynthesis; (R)-pantothenate biosynthesis; beta-alanine from L-aspartate: step 1/1. Catalyzes the pyruvoyl-dependent decarboxylation of aspartate to produce beta-alanine. The protein is Aspartate 1-decarboxylase of Clostridium botulinum (strain ATCC 19397 / Type A).